A 512-amino-acid polypeptide reads, in one-letter code: 2-isopropylmalate synthase (512 aa).

The Pyruvate carboxyltransferase domain occupies 4 to 266 (IQFFDTTLRD…ETNIVLNQFK (263 aa)). Mn(2+) contacts are provided by Asp-13, His-201, His-203, and Asn-237. The regulatory domain stretch occupies residues 390–512 (ELKHLQVQYV…SKQADFEEVK (123 aa)).

The protein belongs to the alpha-IPM synthase/homocitrate synthase family. LeuA type 1 subfamily. In terms of assembly, homodimer. It depends on Mn(2+) as a cofactor.

The protein resides in the cytoplasm. It carries out the reaction 3-methyl-2-oxobutanoate + acetyl-CoA + H2O = (2S)-2-isopropylmalate + CoA + H(+). It participates in amino-acid biosynthesis; L-leucine biosynthesis; L-leucine from 3-methyl-2-oxobutanoate: step 1/4. Its function is as follows. Catalyzes the condensation of the acetyl group of acetyl-CoA with 3-methyl-2-oxobutanoate (2-ketoisovalerate) to form 3-carboxy-3-hydroxy-4-methylpentanoate (2-isopropylmalate). The chain is 2-isopropylmalate synthase from Listeria monocytogenes serotype 4b (strain CLIP80459).